Consider the following 309-residue polypeptide: Non-homologous end-joining factor 1 (309 aa).

Positions 1-134 (MEAVLSALPW…TPVAVVCRQL (134 aa)) are globular head. A C-terminal tail region spans residues 223-298 (GKTGRKRKHS…AGSEDRSTSR (76 aa)). The interval 223 to 309 (GKTGRKRKHS…KKKKAVGLFR (87 aa)) is disordered. Basic and acidic residues predominate over residues 243-252 (HITDHQHISE). 2 stretches are compositionally biased toward polar residues: residues 253–265 (STDVGPSLASQEH) and 273–290 (RSQVANSQQTLPLSSTAG). Positions 297-309 (SRAKKKKAVGLFR) are enriched in basic residues. The XLM motif lies at 299 to 309 (AKKKKAVGLFR).

It belongs to the XRCC4-XLF family. XLF subfamily. Homodimer. Interacts with xrcc4; the interaction is direct and is mediated via a head-to-head interaction between N-terminal head regions. Component of the core long-range non-homologous end joining (NHEJ) complex (also named DNA-PK complex) composed of prkdc/DNA-PKcs, lig4, xrcc4, xrcc6/Ku70, xrcc5/Ku80 and nhej1/xlf.

The protein localises to the nucleus. The protein resides in the chromosome. Its function is as follows. DNA repair protein involved in DNA non-homologous end joining (NHEJ); it is required for double-strand break (DSB) repair and V(D)J recombination and is also involved in telomere maintenance. Plays a key role in NHEJ by promoting the ligation of various mismatched and non-cohesive ends. In some studies, has been shown to associate with xrcc4 to form alternating helical filaments that bridge DNA and act like a bandage, holding together the broken DNA until it is repaired. Alternatively, it has also been shown that rather than forming filaments, a single nhej1 dimer interacts through both head domains with xrcc4 to promote the close alignment of DNA ends. The xrcc4-nhej1/xlf subcomplex binds to the DNA fragments of a DSB in a highly diffusive manner and robustly bridges two independent DNA molecules, holding the broken DNA fragments in close proximity to one other. The mobility of the bridges ensures that the ends remain accessible for further processing by other repair factors. This is Non-homologous end-joining factor 1 (nhej1) from Danio rerio (Zebrafish).